A 591-amino-acid polypeptide reads, in one-letter code: Reduced folate transporter (591 aa).

Residue Met1 is modified to N-acetylmethionine. Residues 1–29 (MVPSSPAVEKQVPVEPGPDPELRSWRHLV) are Cytoplasmic-facing. Ser5 carries the phosphoserine modification. Residues 30–50 (CYLCFYGFMAQIRPGESFITP) traverse the membrane as a helical segment. Residues Ile48 and Thr49 each coordinate folate. The Extracellular segment spans residues 51 to 64 (YLLGPDKNFTREQV). Asn58 carries N-linked (GlcNAc...) asparagine glycosylation. A helical transmembrane segment spans residues 65–87 (TNEITPVLSYSYLAVLVPVFLLT). Residues 88-91 (DYLR) lie on the Cytoplasmic side of the membrane. A helical transmembrane segment spans residues 92 to 112 (YTPVLLLQGLSFVSVWLLLLL). The Extracellular segment spans residues 113 to 116 (GHSV). The helical transmembrane segment at 117 to 139 (AHMQLMELFYSVTMAARIAYSSY) threads the bilayer. Residues Glu123 and Arg133 each coordinate folate. 2',3'-cGAMP is bound by residues Arg133, Ile134, Ser137, Tyr149, and Arg157. Over 140-153 (IFSLVRPARYQRVA) the chain is Cytoplasmic. The chain crosses the membrane as a helical span at residues 154 to 178 (GYSRAAVLLGVFTSSVLGQLLVTVG). Position 164 (Val164) interacts with folate. Topologically, residues 179–183 (RVSFS) are extracellular. A helical transmembrane segment spans residues 184–202 (TLNYISLAFLTFSVVLALF). Topologically, residues 203–266 (LKRPKRSLFF…ELGDSLRRPQ (64 aa)) are cytoplasmic. At Ser225 the chain carries Phosphoserine. Residues 267-292 (LRLWSLWWVFNSAGYYLVVYYVHILW) form a helical membrane-spanning segment. Positions 281, 282, and 286 each coordinate folate. Tyr282 is a 2',3'-cGAMP binding site. The Extracellular segment spans residues 293–304 (NEVDPTTNSARV). The helical transmembrane segment at 305–327 (YNGAADAASTLLGAITSFAAGFV) threads the bilayer. Residue Ser321 participates in 2',3'-cGAMP binding. The Cytoplasmic portion of the chain corresponds to 328–333 (KIRWAR). The chain crosses the membrane as a helical span at residues 334-354 (WSKLLIAGVTATQAGLVFLLA). Residues 355–360 (HTRHPS) lie on the Extracellular side of the membrane. A helical membrane pass occupies residues 361-384 (SIWLCYAAFVLFRGSYQFLVPIAT). Arg373 and Gln377 together coordinate folate. Residues Gln377, Pro381, Thr384, Lys393, Cys396, and Phe400 each coordinate 2',3'-cGAMP. Over 385–398 (FQIASSLSKELCAL) the chain is Cytoplasmic. The chain crosses the membrane as a helical span at residues 399–422 (VFGVNTFFATIVKTIITFIVSDVR). A required for substrate-binding region spans residues 407–419 (ATIVKTIITFIVS). Residues 423 to 430 (GLGLPVRK) are Extracellular-facing. Residues 431-455 (QFQLYSVYFLILSIIYFLGAMLDGL) form a helical membrane-spanning segment. The Cytoplasmic portion of the chain corresponds to 456-591 (RHCQRGHHPR…PSDGVQNVNQ (136 aa)). Phosphoserine is present on residues Ser474, Ser485, Ser499, and Ser503.

It belongs to the reduced folate carrier (RFC) transporter (TC 2.A.48) family. In terms of tissue distribution, placenta, liver, and to a much smaller extent, in lung.

It is found in the cell membrane. Its subcellular location is the apical cell membrane. The protein resides in the basolateral cell membrane. It catalyses the reaction 5-amino-1-(5-phospho-beta-D-ribosyl)imidazole-4-carboxamide(in) + (6S)-5-methyl-5,6,7,8-tetrahydrofolate(out) = 5-amino-1-(5-phospho-beta-D-ribosyl)imidazole-4-carboxamide(out) + (6S)-5-methyl-5,6,7,8-tetrahydrofolate(in). The catalysed reaction is 2',3'-cGAMP(out) + 5-amino-1-(5-phospho-beta-D-ribosyl)imidazole-4-carboxamide(in) = 2',3'-cGAMP(in) + 5-amino-1-(5-phospho-beta-D-ribosyl)imidazole-4-carboxamide(out). The enzyme catalyses 3',3'-cGAMP(out) + 5-amino-1-(5-phospho-beta-D-ribosyl)imidazole-4-carboxamide(in) = 3',3'-cGAMP(in) + 5-amino-1-(5-phospho-beta-D-ribosyl)imidazole-4-carboxamide(out). Antiporter that mediates the import of reduced folates or a subset of cyclic dinucleotides, driven by the export of organic anions. Acts as an importer of immunoreactive cyclic dinucleotides, such as cyclic GMP-AMP (2'-3'-cGAMP), an immune messenger produced in response to DNA virus in the cytosol, and its linkage isomer 3'-3'-cGAMP, thus playing a role in triggering larger immune responses. Mechanistically, acts as a secondary active transporter, which exports intracellular organic anions down their concentration gradients to facilitate the uptake of its substrates. Has high affinity for N5-methyltetrahydrofolate, the predominant circulating form of folate. Also mediates the import of antifolate drug methotrexate. 5-amino-4-imidazolecarboxamide riboside (AICAR), when phosphorylated to AICAR monophosphate, can serve as an organic anion for antiporter activity. This Homo sapiens (Human) protein is Reduced folate transporter.